Consider the following 278-residue polypeptide: NAD kinase (278 aa).

Asp-56 acts as the Proton acceptor in catalysis. Residues 56-57 (DG), 132-133 (NE), Arg-158, Asp-160, and 171-176 (TAYNKS) contribute to the NAD(+) site.

Belongs to the NAD kinase family. It depends on a divalent metal cation as a cofactor.

It localises to the cytoplasm. The catalysed reaction is NAD(+) + ATP = ADP + NADP(+) + H(+). In terms of biological role, involved in the regulation of the intracellular balance of NAD and NADP, and is a key enzyme in the biosynthesis of NADP. Catalyzes specifically the phosphorylation on 2'-hydroxyl of the adenosine moiety of NAD to yield NADP. This chain is NAD kinase, found in Streptococcus agalactiae serotype V (strain ATCC BAA-611 / 2603 V/R).